A 454-amino-acid polypeptide reads, in one-letter code: Oxygen-dependent coproporphyrinogen-III oxidase, mitochondrial (454 aa).

Residues 1-110 constitute a mitochondrion transit peptide; that stretch reads MALQLGRLSS…MLPKTSGTRA (110 aa). The interval 43–70 is disordered; it reads AAGRVCRPPGPAGTEQSRGLGHGSTSRG. S112 carries the phosphoserine modification. Positions 193–202 are important for dimerization; it reads VLQDGCVFEK. S244 is a binding site for coproporphyrinogen III. H258 (proton donor) is an active-site residue. Residue 260 to 262 coordinates coproporphyrinogen III; it reads NYR. An important for dimerization region spans residues 392-428; sequence YVEFNLLYDRGTKFGLFTPGSRIESILMSLPLTARWE. The residue at position 404 (K404) is an N6-acetyllysine; alternate. K404 is modified (N6-succinyllysine; alternate). A coproporphyrinogen III-binding site is contributed by 411 to 413; it reads GSR.

Belongs to the aerobic coproporphyrinogen-III oxidase family. In terms of assembly, homodimer.

The protein resides in the mitochondrion intermembrane space. It catalyses the reaction coproporphyrinogen III + O2 + 2 H(+) = protoporphyrinogen IX + 2 CO2 + 2 H2O. The protein operates within porphyrin-containing compound metabolism; protoporphyrin-IX biosynthesis; protoporphyrinogen-IX from coproporphyrinogen-III (O2 route): step 1/1. Functionally, catalyzes the aerobic oxidative decarboxylation of propionate groups of rings A and B of coproporphyrinogen-III to yield the vinyl groups in protoporphyrinogen-IX and participates to the sixth step in the heme biosynthetic pathway. This Homo sapiens (Human) protein is Oxygen-dependent coproporphyrinogen-III oxidase, mitochondrial.